Here is a 167-residue protein sequence, read N- to C-terminus: NAD(P)H-quinone oxidoreductase subunit I, chloroplastic (167 aa).

2 consecutive 4Fe-4S ferredoxin-type domains span residues 55-84 (GRIH…VDWK) and 95-124 (LNYS…MTEE). 8 residues coordinate [4Fe-4S] cluster: C64, C67, C70, C74, C104, C107, C110, and C114.

Belongs to the complex I 23 kDa subunit family. NDH is composed of at least 16 different subunits, 5 of which are encoded in the nucleus. The cofactor is [4Fe-4S] cluster.

Its subcellular location is the plastid. It localises to the chloroplast thylakoid membrane. It carries out the reaction a plastoquinone + NADH + (n+1) H(+)(in) = a plastoquinol + NAD(+) + n H(+)(out). It catalyses the reaction a plastoquinone + NADPH + (n+1) H(+)(in) = a plastoquinol + NADP(+) + n H(+)(out). Its function is as follows. NDH shuttles electrons from NAD(P)H:plastoquinone, via FMN and iron-sulfur (Fe-S) centers, to quinones in the photosynthetic chain and possibly in a chloroplast respiratory chain. The immediate electron acceptor for the enzyme in this species is believed to be plastoquinone. Couples the redox reaction to proton translocation, and thus conserves the redox energy in a proton gradient. This Lobularia maritima (Sweet alyssum) protein is NAD(P)H-quinone oxidoreductase subunit I, chloroplastic.